Consider the following 338-residue polypeptide: DNA-directed RNA polymerase subunit alpha (338 aa).

Residues 1–225 (MLISQRPTIT…ELFGLARELN (225 aa)) are alpha N-terminal domain (alpha-NTD). The alpha C-terminal domain (alpha-CTD) stretch occupies residues 240 to 338 (TEYIAAYSMP…YIDVEAEDSE (99 aa)). Residues 319-338 (LEGYDAETGGYIDVEAEDSE) are disordered.

The protein belongs to the RNA polymerase alpha chain family. In terms of assembly, homodimer. The RNAP catalytic core consists of 2 alpha, 1 beta, 1 beta' and 1 omega subunit. When a sigma factor is associated with the core the holoenzyme is formed, which can initiate transcription.

The catalysed reaction is RNA(n) + a ribonucleoside 5'-triphosphate = RNA(n+1) + diphosphate. In terms of biological role, DNA-dependent RNA polymerase catalyzes the transcription of DNA into RNA using the four ribonucleoside triphosphates as substrates. The protein is DNA-directed RNA polymerase subunit alpha of Corynebacterium glutamicum (strain R).